Consider the following 1053-residue polypeptide: SPX and EXS domain-containing protein 2 (1053 aa).

The SPX domain maps to 1–339 (MKFRDYLKDN…PRIAKECRKY (339 aa)). The segment covering 54–88 (NNINKNNNNNNNNNNNNNNNNNNNNNINNNNNNNN) has biased composition (low complexity). The interval 54-137 (NNINKNNNNN…VGDEDGGDDD (84 aa)) is disordered. Residues 95 to 112 (QTNSNNISIPNQMAPQES) show a composition bias toward polar residues. The span at 113-122 (SGEDEDDENE) shows a compositional bias: acidic residues. 10 helical membrane passes run 391 to 411 (YIIGFLIGASAILIAQVIFKF), 427 to 447 (MAWLLFRISSLPIILGTLFAL), 476 to 496 (YLMYGMIFVTMWLVVFNVYVD), 510 to 530 (YLLLIPLLFILGSIFFLILPF), 561 to 581 (FFMSVQLLCLGEFLFNMQQIV), 595 to 615 (GVCFKHKAVIFPILSVLPFYW), 630 to 652 (FFPHITSAIRSTFSIVTNILLWV), 666 to 686 (ILWFIINVVGTVYKLYADFTV), 712 to 732 (WVYYVAMSFDTFFRFVWLIVF), and 745 to 765 (PLFLFWFSLSEIAWAAQFIFF). Residues 596 to 798 (VCFKHKAVIF…SQDYKNYMEE (203 aa)) form the EXS domain. Disordered regions lie at residues 799-871 (KKSR…VDDE) and 1023-1053 (HPELNSSNRNQVDPNSPMNRLITRADLNKSR). A compositionally biased stretch (acidic residues) spans 842–853 (DDDDDDESIDSD). Over residues 1023–1040 (HPELNSSNRNQVDPNSPM) the composition is skewed to polar residues.

The protein belongs to the SYG1 (TC 2.A.94) family.

It localises to the membrane. This Dictyostelium discoideum (Social amoeba) protein is SPX and EXS domain-containing protein 2.